We begin with the raw amino-acid sequence, 149 residues long: MAKKITGYVKLQVPAGAANPSPPIGPALGQRGLNIMEFCKAFNAKTAQIEKGTPIPVIITAYQDRSFTFEMKQPPVSFFLKKAAGLKIGKKPASGSKTPGKGAPAGKVTEAQIREIAEKKMPDLNCDSVDAAVAMIRGSARAMGLEITG.

Belongs to the universal ribosomal protein uL11 family. In terms of assembly, part of the ribosomal stalk of the 50S ribosomal subunit. Interacts with L10 and the large rRNA to form the base of the stalk. L10 forms an elongated spine to which L12 dimers bind in a sequential fashion forming a multimeric L10(L12)X complex. Post-translationally, one or more lysine residues are methylated.

Forms part of the ribosomal stalk which helps the ribosome interact with GTP-bound translation factors. The sequence is that of Large ribosomal subunit protein uL11 from Methylobacterium nodulans (strain LMG 21967 / CNCM I-2342 / ORS 2060).